Here is a 431-residue protein sequence, read N- to C-terminus: Sorting nexin-31 (431 aa).

In terms of domain architecture, PX spans 1-107 (MHICIPVTEE…DYFRKLQMDT (107 aa)).

The protein belongs to the sorting nexin family.

May be involved in protein trafficking. This is Sorting nexin-31 (snx31) from Xenopus laevis (African clawed frog).